A 462-amino-acid polypeptide reads, in one-letter code: ATP synthase subunit beta 2 (462 aa).

ATP is bound at residue Gly151–Thr158.

It belongs to the ATPase alpha/beta chains family. F-type ATPases have 2 components, CF(1) - the catalytic core - and CF(0) - the membrane proton channel. CF(1) has five subunits: alpha(3), beta(3), gamma(1), delta(1), epsilon(1). CF(0) has three main subunits: a(1), b(2) and c(9-12). The alpha and beta chains form an alternating ring which encloses part of the gamma chain. CF(1) is attached to CF(0) by a central stalk formed by the gamma and epsilon chains, while a peripheral stalk is formed by the delta and b chains.

It is found in the cell inner membrane. It carries out the reaction ATP + H2O + 4 H(+)(in) = ADP + phosphate + 5 H(+)(out). Produces ATP from ADP in the presence of a proton gradient across the membrane. The catalytic sites are hosted primarily by the beta subunits. This Chlorobaculum tepidum (strain ATCC 49652 / DSM 12025 / NBRC 103806 / TLS) (Chlorobium tepidum) protein is ATP synthase subunit beta 2.